Here is a 1182-residue protein sequence, read N- to C-terminus: Rho GTPase-activating protein 20 (1182 aa).

The tract at residues 1–40 (MEAMSPQQDALGAQPGRSSSLTGMSRIAGGPGTKKKMKTL) is disordered. At Ser-46 the chain carries Phosphoserine. Residues 85 to 185 (TLLIDGPVEL…WLSLLQRYIA (101 aa)) enclose the PH domain. Residues 194 to 283 (KSIPLKIFAK…TALLTQGSRD (90 aa)) enclose the Ras-associating domain. Positions 365–551 (VSLPDLCEND…FLIENCCRVF (187 aa)) constitute a Rho-GAP domain. Phosphoserine occurs at positions 704 and 730. 6 disordered regions span residues 745–772 (QTQP…KRNT), 803–839 (VASY…QKSS), 935–955 (SYSS…SSQD), 982–1011 (TQRK…GQAS), 1074–1101 (LPSC…EGPG), and 1142–1182 (SGGQ…GTDI). A compositionally biased stretch (polar residues) spans 758-772 (KQSSVTGTDVSKRNT). A compositionally biased stretch (basic and acidic residues) spans 811–824 (SQDHPRKQAFDADP).

In terms of biological role, GTPase activator for the Rho-type GTPases by converting them to an inactive GDP-bound state. The protein is Rho GTPase-activating protein 20 (Arhgap20) of Mus musculus (Mouse).